A 396-amino-acid chain; its full sequence is 1-deoxy-D-xylulose 5-phosphate reductoisomerase (396 aa).

Positions 15, 16, 17, 18, 41, and 129 each coordinate NADPH. Residue lysine 130 coordinates 1-deoxy-D-xylulose 5-phosphate. Residue glutamate 131 participates in NADPH binding. Aspartate 155 is a Mn(2+) binding site. The 1-deoxy-D-xylulose 5-phosphate site is built by serine 156, glutamate 157, serine 182, and histidine 205. Glutamate 157 serves as a coordination point for Mn(2+). Glycine 211 lines the NADPH pocket. 4 residues coordinate 1-deoxy-D-xylulose 5-phosphate: serine 218, asparagine 223, lysine 224, and glutamate 227. Position 227 (glutamate 227) interacts with Mn(2+).

Belongs to the DXR family. Requires Mg(2+) as cofactor. Mn(2+) serves as cofactor.

It catalyses the reaction 2-C-methyl-D-erythritol 4-phosphate + NADP(+) = 1-deoxy-D-xylulose 5-phosphate + NADPH + H(+). The protein operates within isoprenoid biosynthesis; isopentenyl diphosphate biosynthesis via DXP pathway; isopentenyl diphosphate from 1-deoxy-D-xylulose 5-phosphate: step 1/6. Its function is as follows. Catalyzes the NADPH-dependent rearrangement and reduction of 1-deoxy-D-xylulose-5-phosphate (DXP) to 2-C-methyl-D-erythritol 4-phosphate (MEP). The protein is 1-deoxy-D-xylulose 5-phosphate reductoisomerase of Xanthomonas euvesicatoria pv. vesicatoria (strain 85-10) (Xanthomonas campestris pv. vesicatoria).